The sequence spans 86 residues: Omega-theraphotoxin-Hhn1e (86 aa).

The signal sequence occupies residues Met-1–Ala-21. The propeptide occupies Ser-22–Arg-50. 2 disulfides stabilise this stretch: Cys-52/Cys-66 and Cys-65/Cys-78.

This sequence belongs to the neurotoxin 10 (Hwtx-1) family. 17 (Hntx-9) subfamily. Expressed by the venom gland.

The protein localises to the secreted. Its function is as follows. Ion channel inhibitor. The sequence is that of Omega-theraphotoxin-Hhn1e from Cyriopagopus hainanus (Chinese bird spider).